Consider the following 444-residue polypeptide: Putative zinc metalloprotease XF_1047 (444 aa).

Residue His-22 coordinates Zn(2+). Glu-23 is a catalytic residue. Position 26 (His-26) interacts with Zn(2+). Residues 98-120 (IAIVAAGPLANLLLCMLLLWVLF) form a helical membrane-spanning segment. Residues 192 to 276 (TLELSKLKQP…DGHPGMIEIR (85 aa)) enclose the PDZ domain. 2 consecutive transmembrane segments (helical) span residues 371-393 (VGWF…LFPI) and 418-440 (AMAA…AFYN).

This sequence belongs to the peptidase M50B family. It depends on Zn(2+) as a cofactor.

Its subcellular location is the cell inner membrane. This is Putative zinc metalloprotease XF_1047 from Xylella fastidiosa (strain 9a5c).